The chain runs to 378 residues: MPTIGIVAGEASGDLLGSHLIRALKKQRPDLKFVGIAGPKMIAEGAETLFPMERLSVRGYVEVLRHLPGLLKIRKEVAQYFLDHRPDVFIGIDAPDFNFTLERKLKHQGIPTVHYVSPSIWAWRRGKIKKIQQAVSHMLALFPFEPEIYRQAGVAVSYVGHPLADMLPMEPDMEGAREELKLPQDSLVVAMLPGSRQSEVQQLADLYIKTAKLILSERPDARFLVPLITRETRAIFERALYANEGYDLPVSIMFGHAHQAMEAANAVIVASGTATLEAALIKRPMIITYRMPNLSWQILKRMKYLPYVGLPNVLAGRFIVPELLQHDAVPDKLAATLLQMLSDKSQIADIQTEFRRMHELLRQNTEEKAARAVLSFIK.

The protein belongs to the LpxB family.

The enzyme catalyses a lipid X + a UDP-2-N,3-O-bis[(3R)-3-hydroxyacyl]-alpha-D-glucosamine = a lipid A disaccharide + UDP + H(+). Its pathway is bacterial outer membrane biogenesis; LPS lipid A biosynthesis. In terms of biological role, condensation of UDP-2,3-diacylglucosamine and 2,3-diacylglucosamine-1-phosphate to form lipid A disaccharide, a precursor of lipid A, a phosphorylated glycolipid that anchors the lipopolysaccharide to the outer membrane of the cell. The protein is Lipid-A-disaccharide synthase of Methylobacillus flagellatus (strain ATCC 51484 / DSM 6875 / VKM B-1610 / KT).